A 687-amino-acid polypeptide reads, in one-letter code: Triadin (687 aa).

Over 1–47 the chain is Cytoplasmic; sequence MTEITAEGNASITTTVIDNKNGSVPKSPGKVLKRTVTEDIVTTFSSP. A helical membrane pass occupies residues 48 to 68; sequence AAWLLVIALIITWSAVAIVMF. Topologically, residues 69 to 687 are lumenal; sequence DLVDYKNFSA…NSPGQKQQEQ (619 aa). A compositionally biased stretch (acidic residues) spans 117–130; it reads DGDEDDEDADEDID. Disordered regions lie at residues 117-265, 280-643, and 660-687; these read DGDE…EQKD, GDLK…QKSP, and FQFP…QQEQ. A compositionally biased stretch (basic and acidic residues) spans 131–265; the sequence is KGEIEEPPLK…PAVPKHEQKD (135 aa). The segment covering 295 to 306 has biased composition (polar residues); the sequence is LTASRPALSTPS. Ser-303 and Ser-306 each carry phosphoserine. The span at 307-356 shows a compositional bias: basic and acidic residues; sequence LEEKEKEEKKKVEKKVTSDTKKKEKGEAKKKSEKETVIDGKGKEPGKPPE. Over residues 357 to 370 the composition is skewed to low complexity; it reads TKQTTTKLTTQAAA. Basic and acidic residues-rich tracts occupy residues 371 to 390, 396 to 431, 442 to 459, and 466 to 501; these read TKDE…EEKP, EKKE…KEEI, GKKE…DVKP, and LKKE…KEAK. N-linked (GlcNAc...) asparagine glycosylation is present at Asn-514. Composition is skewed to basic and acidic residues over residues 539-583 and 594-630; these read TAEK…KVPP and TRAE…DKEV. Polar residues-rich tracts occupy residues 631-643 and 667-687; these read TNNV…QKSP and VQHS…QQEQ.

Homooligomer of variable subunit number; disulfide-linked. Interacts with CASQ1 in skeletal muscle. Interacts with CASQ2. Interacts with RYR1 in skeletal muscle. Phosphorylated by CaMK2. In terms of processing, N-glycosylated. Detected in skeletal muscle (at protein level). Detected in skeletal muscle.

The protein localises to the sarcoplasmic reticulum membrane. The protein resides in the microsome. Its subcellular location is the cell membrane. It localises to the sarcolemma. In terms of biological role, contributes to the regulation of lumenal Ca2+ release via the sarcoplasmic reticulum calcium release channels RYR1 and RYR2, a key step in triggering skeletal and heart muscle contraction. Required for normal organization of the triad junction, where T-tubules and the sarcoplasmic reticulum terminal cisternae are in close contact. Required for normal skeletal muscle strength. Plays a role in excitation-contraction coupling in the heart and in regulating the rate of heart beats. The polypeptide is Triadin (Rattus norvegicus (Rat)).